The primary structure comprises 348 residues: Protein lifeguard 1 (348 aa).

The segment at 1–118 (MSHEKSFLVS…GNYQEEGPPS (118 aa)) is disordered. Over residues 14–41 (YPPPNPGYPVGPQAPMPPYVQPPYPGAP) the composition is skewed to pro residues. Low complexity predominate over residues 42–57 (YPQAAFQPSPYGQPGY). Residues 82 to 101 (GPYPQSPFPPNPYGQPPPFQ) are compositionally biased toward pro residues. The next 7 membrane-spanning stretches (helical) occupy residues 142 to 162 (VFLV…IFTF), 174 to 194 (VWTY…LSCC), 205 to 225 (LVAL…IASF), 230 to 250 (AVIM…IFSM), 260 to 280 (MGVL…CIFI), 284 to 304 (ILEI…LAVD), and 323 to 343 (FAAL…LTII).

It belongs to the BI1 family. LFG subfamily.

The protein localises to the membrane. Potential apoptotic regulator. The chain is Protein lifeguard 1 (Grina) from Rattus norvegicus (Rat).